The sequence spans 352 residues: Desmethylxanthohumol 6'-O-methyltransferase (352 aa).

Residue Asp-219 participates in S-adenosyl-L-methionine binding. His-257 acts as the Proton acceptor in catalysis.

Belongs to the class I-like SAM-binding methyltransferase superfamily. Cation-independent O-methyltransferase family. As to quaternary structure, homodimer. In terms of tissue distribution, highly expressed in lupulin glands. Detected in early-, mid- and late-stage cones.

The protein resides in the cytoplasm. It catalyses the reaction desmethylxanthohumol + S-adenosyl-L-methionine = xanthohumol + S-adenosyl-L-homocysteine + H(+). The enzyme catalyses xanthogalenol + S-adenosyl-L-methionine = 4'-O-methylxanthohumol + S-adenosyl-L-homocysteine + H(+). It functions in the pathway secondary metabolite biosynthesis. Its activity is regulated as follows. Inhibited by S-adenosyl homocysteine. Its function is as follows. Involved in the biosynthesis of prenylated phenolics natural products which contribute to the bitter taste of beer and display broad biological activities. Catalyzes the biosynthesis of xanthohumol. Methylates desmethylxanthohumol and xanthogalenol, but not caffeic acid, prenylflavanones, simple phenols or phenylpropanoids. The polypeptide is Desmethylxanthohumol 6'-O-methyltransferase (Humulus lupulus (European hop)).